An 891-amino-acid polypeptide reads, in one-letter code: Tubulin polyglutamylase TTLL6 (891 aa).

Disordered stretches follow at residues 1-25 (MGALLLHPSRRGPAGVVASWTSSPA) and 44-106 (SQAR…KRKK). Residues 63–76 (SEEKGDSSKEDPKE) show a composition bias toward basic and acidic residues. The segment covering 88 to 99 (GAQNGLQNAQQQ) has biased composition (low complexity). The region spanning 106-449 (KKRLVINLSS…ESCDKKKVLE (344 aa)) is the TTL domain. Residues lysine 223, 229–230 (QG), 251–254 (QLYI), and 264–266 (KFD) contribute to the ATP site. Residue glutamine 229 coordinates a protein. Arginine 290 lines the L-glutamate pocket. 312 to 313 (TN) is an ATP binding site. L-glutamate is bound by residues tyrosine 314, serine 315, and lysine 332. Residues aspartate 395, glutamate 408, and asparagine 410 each coordinate Mg(2+). Residue histidine 411 participates in a protein binding. Residues 420-499 (RLDKEVKDGL…CGGFRLIYPS (80 aa)) are c-MTBD region. Lysine 426 provides a ligand contact to L-glutamate. Disordered stretches follow at residues 546-584 (QMKKKVEMQGESAGEQVRKKGMRGWQQKQQQKDKAATQA), 607-636 (GERKNETDSSLNQEAPTEEASSVFPKLTSA), 687-711 (TTPESTTQLSISPKSPPTLAVTASS), and 800-820 (NNLSQNPSLPGECHSRSDSSG). Polar residues predominate over residues 687-699 (TTPESTTQLSISP).

This sequence belongs to the tubulin--tyrosine ligase family. Found in a complex with CEP41. Requires Mg(2+) as cofactor.

It localises to the cytoplasm. The protein resides in the cytoskeleton. It is found in the cilium axoneme. Its subcellular location is the cilium basal body. It carries out the reaction L-glutamyl-[protein] + L-glutamate + ATP = gamma-L-glutamyl-L-glutamyl-[protein] + ADP + phosphate + H(+). It catalyses the reaction (L-glutamyl)(n)-gamma-L-glutamyl-L-glutamyl-[protein] + L-glutamate + ATP = (L-glutamyl)(n+1)-gamma-L-glutamyl-L-glutamyl-[protein] + ADP + phosphate + H(+). Its function is as follows. Polyglutamylase which modifies both tubulin and non-tubulin proteins, generating alpha-linked polyglutamate side chains on the gamma-carboxyl group of specific glutamate residues of target proteins. Preferentially mediates ATP-dependent long polyglutamate chain elongation over the initiation step of the polyglutamylation reaction. Preferentially modifies the alpha-tubulin tail over a beta-tail. Promotes tubulin polyglutamylation which stimulates spastin/SPAST-mediated microtubule severing, thereby regulating microtubule functions. Mediates microtubule polyglutamylation in primary cilia axoneme, which is important for ciliary structural formation and motility. Mediates microtubule polyglutamylation in motile cilia, necessary for the regulation of ciliary coordinated beating. Polyglutamylates non-tubulin protein nucleotidyltransferase CGAS, leading to CGAS DNA-binding inhibition, thereby preventing antiviral defense response. The protein is Tubulin polyglutamylase TTLL6 of Homo sapiens (Human).